The primary structure comprises 264 residues: S-adenosylmethionine decarboxylase proenzyme (264 aa).

Catalysis depends on serine 113, which acts as the Schiff-base intermediate with substrate; via pyruvic acid. Residue serine 113 is modified to Pyruvic acid (Ser); by autocatalysis. The Proton acceptor; for processing activity role is filled by histidine 118. The active-site Proton donor; for catalytic activity is the cysteine 141.

This sequence belongs to the prokaryotic AdoMetDC family. Type 2 subfamily. In terms of assembly, heterooctamer of four alpha and four beta chains arranged as a tetramer of alpha/beta heterodimers. Pyruvate serves as cofactor. Post-translationally, is synthesized initially as an inactive proenzyme. Formation of the active enzyme involves a self-maturation process in which the active site pyruvoyl group is generated from an internal serine residue via an autocatalytic post-translational modification. Two non-identical subunits are generated from the proenzyme in this reaction, and the pyruvate is formed at the N-terminus of the alpha chain, which is derived from the carboxyl end of the proenzyme. The post-translation cleavage follows an unusual pathway, termed non-hydrolytic serinolysis, in which the side chain hydroxyl group of the serine supplies its oxygen atom to form the C-terminus of the beta chain, while the remainder of the serine residue undergoes an oxidative deamination to produce ammonia and the pyruvoyl group blocking the N-terminus of the alpha chain.

The enzyme catalyses S-adenosyl-L-methionine + H(+) = S-adenosyl 3-(methylsulfanyl)propylamine + CO2. It functions in the pathway amine and polyamine biosynthesis; S-adenosylmethioninamine biosynthesis; S-adenosylmethioninamine from S-adenosyl-L-methionine: step 1/1. In terms of biological role, catalyzes the decarboxylation of S-adenosylmethionine to S-adenosylmethioninamine (dcAdoMet), the propylamine donor required for the synthesis of the polyamines spermine and spermidine from the diamine putrescine. The chain is S-adenosylmethionine decarboxylase proenzyme from Pseudomonas aeruginosa (strain ATCC 15692 / DSM 22644 / CIP 104116 / JCM 14847 / LMG 12228 / 1C / PRS 101 / PAO1).